Reading from the N-terminus, the 22-residue chain is Proline-rich peptide (22 aa).

Residues 1-22 (FVDRNRIPRSNNGPKIPIISNP) are disordered.

Its subcellular location is the secreted. Its function is as follows. Antibacterial peptide active against Gram-positive bacterium M.luteus and Gram-negative bacterium E.coli. This Calliphora vicina (Blue blowfly) protein is Proline-rich peptide.